We begin with the raw amino-acid sequence, 399 residues long: Protein DDI1 homolog 2 (399 aa).

The 81-residue stretch at 1 to 81 folds into the Ubiquitin-like domain; sequence MLLTVYCVRR…VILRQKENAD (81 aa). Positions 99 to 134 are disordered; the sequence is IAVPGTSSPRQRQPPGTQQSHSSPGEITSSPQGLDN. Polar residues predominate over residues 103–131; sequence GTSSPRQRQPPGTQQSHSSPGEITSSPQG. T104 is subject to Phosphothreonine. Phosphoserine occurs at positions 106, 121, 128, 150, and 194. The active site involves D252. Residues 376–395 carry the Ubiquitin-binding motif; the sequence is EEIADQELAEALQKSAEDAE.

The protein belongs to the DDI1 family. As to quaternary structure, homodimer. Interacts with MCM6; PCNA; PSMD4; PSMD8; RPA2 and RPN2. Interacts with RTF2.

It is found in the cytoplasm. The protein localises to the cytosol. It localises to the chromosome. In terms of biological role, aspartic protease that mediates the cleavage of NFE2L1/NRF1 at 'Leu-104', thereby promoting release of NFE2L1/NRF1 from the endoplasmic reticulum membrane. Ubiquitination of NFE2L1/NRF1 is a prerequisite for cleavage, suggesting that DDI2 specifically recognizes and binds ubiquitinated NFE2L1/NRF1. Seems to act as a proteasomal shuttle which links the proteasome and replication fork proteins like RTF2. Required, with DDI1, for cellular survival following replication stress. Together or redudantly with DDI1, removes RTF2 from stalled forks to allow cell cycle progression after replication stress and maintains genome integrity. The protein is Protein DDI1 homolog 2 of Homo sapiens (Human).